The following is a 264-amino-acid chain: Thymidylate synthase (264 aa).

R21 lines the dUMP pocket. H51 provides a ligand contact to (6R)-5,10-methylene-5,6,7,8-tetrahydrofolate. 126-127 (RR) serves as a coordination point for dUMP. C146 acts as the Nucleophile in catalysis. DUMP is bound by residues 166–169 (RSCD), N177, and 207–209 (HLY). Position 169 (D169) interacts with (6R)-5,10-methylene-5,6,7,8-tetrahydrofolate. Residue A263 coordinates (6R)-5,10-methylene-5,6,7,8-tetrahydrofolate.

It belongs to the thymidylate synthase family. Bacterial-type ThyA subfamily. In terms of assembly, homodimer.

The protein resides in the cytoplasm. The catalysed reaction is dUMP + (6R)-5,10-methylene-5,6,7,8-tetrahydrofolate = 7,8-dihydrofolate + dTMP. The protein operates within pyrimidine metabolism; dTTP biosynthesis. In terms of biological role, catalyzes the reductive methylation of 2'-deoxyuridine-5'-monophosphate (dUMP) to 2'-deoxythymidine-5'-monophosphate (dTMP) while utilizing 5,10-methylenetetrahydrofolate (mTHF) as the methyl donor and reductant in the reaction, yielding dihydrofolate (DHF) as a by-product. This enzymatic reaction provides an intracellular de novo source of dTMP, an essential precursor for DNA biosynthesis. This Pectobacterium carotovorum subsp. carotovorum (strain PC1) protein is Thymidylate synthase.